Consider the following 207-residue polypeptide: Large ribosomal subunit protein uL4 (207 aa).

A disordered region spans residues 44 to 78; sequence LRQGTHKTKTRSEVRGGGRKPWRQKGTGRARQGSI. The span at 60–71 shows a compositional bias: basic residues; sequence GGRKPWRQKGTG.

Belongs to the universal ribosomal protein uL4 family. Part of the 50S ribosomal subunit.

One of the primary rRNA binding proteins, this protein initially binds near the 5'-end of the 23S rRNA. It is important during the early stages of 50S assembly. It makes multiple contacts with different domains of the 23S rRNA in the assembled 50S subunit and ribosome. In terms of biological role, forms part of the polypeptide exit tunnel. This Halalkalibacterium halodurans (strain ATCC BAA-125 / DSM 18197 / FERM 7344 / JCM 9153 / C-125) (Bacillus halodurans) protein is Large ribosomal subunit protein uL4.